Reading from the N-terminus, the 457-residue chain is Tubulin gamma-2 chain (457 aa).

142–148 (AGGTGSG) contacts GTP.

The protein belongs to the tubulin family. In terms of assembly, interacts with Ote. Expressed in nurse cells and oocytes of developing egg chambers.

It localises to the cytoplasm. The protein localises to the cytoskeleton. Its subcellular location is the microtubule organizing center. It is found in the centrosome. The protein resides in the spindle. Functionally, tubulin is the major constituent of microtubules. The gamma chain is found at microtubule organizing centers (MTOC) such as the spindle poles or the centrosome, suggesting that it is involved in the minus-end nucleation of microtubule assembly. Required for oocyte activation and consequently for organization of the female meiotic spindle. Essential for centrosome organization and assembly of biastral mitotic spindles in embryos. Plays a role in stabilizing the augmin complex on the meiotic spindle. This is Tubulin gamma-2 chain (gammaTub37C) from Drosophila melanogaster (Fruit fly).